A 477-amino-acid polypeptide reads, in one-letter code: Probable periplasmic serine endoprotease DegP-like (477 aa).

The N-terminal stretch at 1–27 is a signal peptide; that stretch reads MSIPRLKSYLTMFAAVLMLGQVLTAQA. Active-site charge relay system residues include His-117, Asp-147, and Ser-220. Residues 218 to 220 and 275 to 279 each bind substrate; these read GNS and LGVVI. 2 PDZ domains span residues 264-355 and 361-466; these read LKKD…IRNG and DISV…LRQG.

Belongs to the peptidase S1C family.

The protein localises to the periplasm. It catalyses the reaction Acts on substrates that are at least partially unfolded. The cleavage site P1 residue is normally between a pair of hydrophobic residues, such as Val-|-Val.. Functionally, might be efficient in the degradation of transiently denatured and unfolded proteins which accumulate in the periplasm following stress conditions. This chain is Probable periplasmic serine endoprotease DegP-like, found in Pseudomonas putida (strain GB-1).